A 593-amino-acid chain; its full sequence is Sodium-independent sulfate anion transporter (593 aa).

The Extracellular portion of the chain corresponds to 1–34; it reads MAPDTCCCSATALRRRLPVLAWVPDYSLQWLRLD. A helical membrane pass occupies residues 35–55; sequence FIAGLSVGLTVIPQALAYAEV. Residue Ala-56 is a topological domain, cytoplasmic. The chain crosses the membrane as a helical span at residues 57-77; the sequence is GLPPQYGLYSAFMGCFVYFFL. Residues 78-82 lie on the Extracellular side of the membrane; the sequence is GTSRD. A helical membrane pass occupies residues 83-100; the sequence is VTLGPTAIMSLLVSFYTF. Residues 101-106 lie on the Cytoplasmic side of the membrane; sequence REPAYA. The chain crosses the membrane as a helical span at residues 107–127; the sequence is VLLAFLSGCIQLAMGLLHLGF. Residues 128-176 are Extracellular-facing; the sequence is LLDFISCPVIKGFTSAASITIGFGQIKNLLGLQKIPRQFFLQVYHTFLH. Residues 177-197 form a helical membrane-spanning segment; it reads IGETRVGDAVLGLASMLLLLV. The Cytoplasmic segment spans residues 198-233; the sequence is LKCMREHMPPPHPEMPLAVKFSRGLVWTVTTARNAL. The helical transmembrane segment at 234-254 threads the bilayer; sequence VVSSAALIAYAFEVTGSHPFV. Residues 255–287 lie on the Extracellular side of the membrane; the sequence is LTGKIAEGLPPVRIPPFSVTRDNKTISFSEMVQ. Residues 288–308 traverse the membrane as a helical segment; sequence DMGAGLAVVPLMGLLESIAVA. Residues 309–324 lie on the Cytoplasmic side of the membrane; that stretch reads KSFASQNNYRIDANQE. A helical transmembrane segment spans residues 325–345; it reads LLAIGLTNVLGSLVSSYPVTG. At 346–361 the chain is on the extracellular side; sequence SFGRTAVNAQTGVCTP. The helical transmembrane segment at 362-382 threads the bilayer; it reads AGGLVTGALVLLSLNYLTSLF. Ser-383 is a topological domain (cytoplasmic). A helical membrane pass occupies residues 384–404; sequence YIPKSALAAVIITAVTPLFDV. Over 405-417 the chain is Extracellular; the sequence is KIFRSLWRVQRLD. A helical membrane pass occupies residues 418 to 438; the sequence is LLPLCVTFLLSFWEIQYGILA. Topologically, residues 439-593 are cytoplasmic; the sequence is GSLVSLLILL…SSLLKSPSGP (155 aa). In terms of domain architecture, STAS spans 453–566; that stretch reads RPKTQVSEGQ…EEAEKFLQQE (114 aa). The tract at residues 564 to 593 is disordered; it reads QQEPGTEPNSIHEDAVPEQRSSLLKSPSGP. A compositionally biased stretch (polar residues) spans 582-593; it reads QRSSLLKSPSGP.

This sequence belongs to the SLC26A/SulP transporter (TC 2.A.53) family. Abundantly expressed in the cerebellum, with a predominant expression in Purkinje cells (at protein level). As to expression, predominantly expressed in the kidney and brain. In the kidney localizes in collecting duct intercalated cells (at protein level). In terms of tissue distribution, predominantly expressed in the brain with lower levels in the kidney.

The protein resides in the cell membrane. The protein localises to the lysosome membrane. It localises to the apical cell membrane. Its subcellular location is the basolateral cell membrane. It carries out the reaction hydrogencarbonate(in) + chloride(out) = hydrogencarbonate(out) + chloride(in). The catalysed reaction is sulfate(in) + H(+)(in) = sulfate(out) + H(+)(out). It catalyses the reaction oxalate(in) + chloride(out) = oxalate(out) + chloride(in). Its function is as follows. Sodium-independent anion exchanger mediating bicarbonate, chloride, sulfate and oxalate transport. Exhibits sodium-independent sulfate anion transporter activity that may cooperate with SLC26A2 to mediate DIDS-sensitive sulfate uptake into high endothelial venules endothelial cells (HEVEC). In the kidney, mediates chloride-bicarbonate exchange, facilitating V-ATPase-mediated acid secretion. May function as a chloride channel, playing an important role in moderating chloride homeostasis and neuronal activity in the cerebellum. This chain is Sodium-independent sulfate anion transporter, found in Mus musculus (Mouse).